A 161-amino-acid polypeptide reads, in one-letter code: MKLSEIADNAGSRKKRMRVGRGIGSGKGKTAGRGGKGQTARSGVRIKGFEGGQMPLHRRLPKRGFNNIFRLDFAEINLDRLQEAIDAKAVDAGAVINAEVLVAAGVVRRAKDGVRLLGRGELKSKLTIEVYGASKPAIAAVEKAGGTVKILAPVKDEGEAA.

Residues 1–44 (MKLSEIADNAGSRKKRMRVGRGIGSGKGKTAGRGGKGQTARSGV) are disordered. A compositionally biased stretch (gly residues) spans 21–37 (RGIGSGKGKTAGRGGKG).

Belongs to the universal ribosomal protein uL15 family. As to quaternary structure, part of the 50S ribosomal subunit.

Its function is as follows. Binds to the 23S rRNA. The sequence is that of Large ribosomal subunit protein uL15 from Rhodopseudomonas palustris (strain BisA53).